A 507-amino-acid chain; its full sequence is MKESQVYLERARSRQQHFLYSLIFREYIYGLAYSHNLNRSLFVENVGYDNKYSLLIVKRLITRMYQQNHLIISANDSNKNSFWGYNNNYYSQIISEGFSIVVEIPFFLQLSSSLEEAEIIKYYKNFRSIHSIFPFLEDKFTYLNYVSDIRIPYPIHLEILVQILRYWVKDAPFFHLLRLFLCNWNSFITTKNKKSISTFSKINPRFFLFLYNFYVCEYESIFVFLRNQSSHLPLKSFRVFFERIFFYAKREHLVKLFAKDFLYTLTLTFFKDPNIHYVRYQGKCILASKNAPFLMDKWKHYFIHLWQCFFDVWSQPRTININPLSEHSFKLLGYFSNVRLNRSVVRSQMLQNTFLIEIVIKKIDIIVPILPLIRSLAKAKFCNVLGQPISKPVWADSSDFDIIDRFLRISRNLSHYYKGSSKKKSLYRIKYILRLSCIKTLACKHKSTVRAFLKRSGSEEFLQEFFTEEEEILSLIFPRDSSTLERLSRNRIWYLDILFSNDLVHDE.

Belongs to the intron maturase 2 family. MatK subfamily.

Its subcellular location is the plastid. The protein resides in the chloroplast. Its function is as follows. Usually encoded in the trnK tRNA gene intron. Probably assists in splicing its own and other chloroplast group II introns. The polypeptide is Maturase K (Lens ervoides (Beaded lentil)).